Consider the following 398-residue polypeptide: Phosphomevalonate dehydratase large subunit (398 aa).

Positions 48, 49, 50, 76, and 77 each coordinate (R)-5-phosphomevalonate. [4Fe-4S] cluster is bound at residue Cys116. (R)-5-phosphomevalonate contacts are provided by Glu136 and Ser137. [4Fe-4S] cluster is bound by residues Cys287 and Cys342. Residue Lys361 coordinates (R)-5-phosphomevalonate.

The protein belongs to the AcnX type II large subunit family. As to quaternary structure, heterodimer composed of a large subunit (PMDh-L) and a small subunit (PMDh-S). The cofactor is [4Fe-4S] cluster.

The enzyme catalyses (R)-5-phosphomevalonate = (2E)-3-methyl-5-phosphooxypent-2-enoate + H2O. It functions in the pathway isoprenoid biosynthesis; isopentenyl diphosphate biosynthesis via mevalonate pathway. Functionally, component of a hydro-lyase that catalyzes the dehydration of mevalonate 5-phosphate (MVA5P) to form trans-anhydromevalonate 5-phosphate (tAHMP). Involved in the archaeal mevalonate (MVA) pathway, which provides fundamental precursors for isoprenoid biosynthesis, such as isopentenyl diphosphate (IPP) and dimethylallyl diphosphate (DMAPP). This is Phosphomevalonate dehydratase large subunit from Methanosarcina mazei (strain ATCC BAA-159 / DSM 3647 / Goe1 / Go1 / JCM 11833 / OCM 88) (Methanosarcina frisia).